The following is a 221-amino-acid chain: Serine/arginine-rich splicing factor 9 (221 aa).

RRM domains are found at residues 14-89 (GRIY…FPRA) and 111-187 (FRVL…PERG). Residue lysine 36 forms a Glycyl lysine isopeptide (Lys-Gly) (interchain with G-Cter in SUMO2) linkage. A compositionally biased stretch (low complexity) spans 187–198 (GTSYGCSRSRSG). Residues 187 to 221 (GTSYGCSRSRSGSRGRDSPYQSRGSPHYFSPFRPY) are disordered. The tract at residues 188–200 (TSYGCSRSRSGSR) is interaction with SAFB1. Phosphoserine is present on residues serine 189, serine 193, serine 195, serine 204, serine 208, and serine 211. Tyrosine 214 carries the phosphotyrosine modification. Serine 216 carries the post-translational modification Phosphoserine.

Belongs to the splicing factor SR family. As to quaternary structure, interacts with KHDRBS3. Interacts with HABP4. Interacts with NOL3/ARC/NOP30. Interacts with NSEP1/YB-1/YB1. Interacts with SAFB/SAFB1. Interacts with SRSF6/SFRS6. Interacts with TRA2B/SFRS10. Interacts with C1QBP. May also interact with DUSP11/PIR1. In terms of processing, extensively phosphorylated on serine residues in the RS domain.

It localises to the nucleus. Functionally, plays a role in constitutive splicing and can modulate the selection of alternative splice sites. Represses the splicing of MAPT/Tau exon 10. This Rattus norvegicus (Rat) protein is Serine/arginine-rich splicing factor 9 (Srsf9).